A 192-amino-acid chain; its full sequence is NADH dehydrogenase [ubiquinone] iron-sulfur protein 3 (192 aa).

The protein belongs to the complex I 30 kDa subunit family. As to quaternary structure, complex I is composed of about 45 different subunits. This is a component of the iron-sulfur (IP) fragment of the enzyme.

Its subcellular location is the mitochondrion inner membrane. It carries out the reaction a ubiquinone + NADH + 5 H(+)(in) = a ubiquinol + NAD(+) + 4 H(+)(out). Core subunit of the mitochondrial membrane respiratory chain NADH dehydrogenase (Complex I) that is believed to belong to the minimal assembly required for catalysis. Complex I functions in the transfer of electrons from NADH to the respiratory chain. The immediate electron acceptor for the enzyme is believed to be ubiquinone. This chain is NADH dehydrogenase [ubiquinone] iron-sulfur protein 3 (NAD9), found in Beta trigyna (Caucasian wild beet).